Reading from the N-terminus, the 141-residue chain is Large ribosomal subunit protein uL16 (141 aa).

This sequence belongs to the universal ribosomal protein uL16 family. As to quaternary structure, part of the 50S ribosomal subunit.

Functionally, binds 23S rRNA and is also seen to make contacts with the A and possibly P site tRNAs. This Deinococcus geothermalis (strain DSM 11300 / CIP 105573 / AG-3a) protein is Large ribosomal subunit protein uL16.